We begin with the raw amino-acid sequence, 245 residues long: Complement C1q subcomponent subunit C (245 aa).

The signal sequence occupies residues 1-28; that stretch reads MVVGTSCQPQHGLYLLLLLLALPLRSQA. The Collagen-like domain maps to 31–112; it reads GCYGIPGMPG…GPPGEPGEEG (82 aa). 5 positions are modified to 4-hydroxyproline: proline 36, proline 39, proline 42, proline 45, and proline 63. The segment at 42-119 is disordered; sequence PGTPGKDGHD…EEGRYKQKHQ (78 aa). At lysine 75 the chain carries 5-hydroxylysine. An O-linked (Gal...) hydroxylysine glycan is attached at lysine 75. 4-hydroxyproline is present on residues proline 81, proline 96, proline 99, and proline 105. Positions 98–107 are enriched in pro residues; sequence DPGPRGPPGE. One can recognise a C1q domain in the interval 115–245; it reads KQKHQSVFTV…VFSGFLLFPD (131 aa). Residues cysteine 179 and cysteine 193 are joined by a disulfide bond.

Core component of the complement C1 complex, a calcium-dependent complex composed of 1 molecule of the C1Q subcomplex, 2 molecules of C1R and 2 molecules of C1S. The C1Q subcomplex is composed 18 subunits: 3 chains of C1QA, C1QB, and C1QC trimerize to form 6 collagen-like triple helices connected to six globular ligand-recognition modules (C1q domain). In terms of processing, O-linked glycans consist of Glc-Gal disaccharides bound to the oxygen atom of post-translationally added hydroxyl groups.

It is found in the secreted. It localises to the cell surface. The C1Q subcomplex is inhibited by sulfated molecules, such as triterpenoid sulfates, heparan sulfate, or chondroitin sulfates. Functionally, core component of the complement C1 complex, a multiprotein complex that initiates the classical pathway of the complement system, a cascade of proteins that leads to phagocytosis and breakdown of pathogens and signaling that strengthens the adaptive immune system. The classical complement pathway is initiated by the C1Q subcomplex of the C1 complex, which specifically binds IgG or IgM immunoglobulins complexed with antigens, forming antigen-antibody complexes on the surface of pathogens: C1QA, together with C1QB and C1QC, specifically recognizes and binds the Fc regions of IgG or IgM via its C1q domain. Immunoglobulin-binding activates the proenzyme C1R, which cleaves C1S, initiating the proteolytic cascade of the complement system. The C1Q subcomplex is activated by a hexamer of IgG complexed with antigens, while it is activated by a pentameric IgM. The C1Q subcomplex also recognizes and binds phosphatidylserine exposed on the surface of cells undergoing programmed cell death, possibly promoting activation of the complement system. In Rattus norvegicus (Rat), this protein is Complement C1q subcomponent subunit C.